Consider the following 309-residue polypeptide: MSEINISAVAVKELREKTGAGMMDCKKALIETSGNFEEAIDFLRKKGLAAAAKKAGRIASEGLTAAKVDGLTGVVIEVNSETDFVARNEQFQDLVKDIANLAVIAKTIDTLKTFKMQSGKSVEEEIIENIATIGENLTLRRMDILEISEGAIGSYVHNEVVPNLGKISVLVGLASNAKDKAKLEALAKQIAVHVAGNNPQSIDDSSLDQALVERERKVFFEKSKEEGKPDNIIAKMVEGRIRKFFSEVVLLQQNFLFEPKLTVAEVIKNAEKELGAEIKIAKFIRYELGEGIEHEEKNFADEVAAITQG.

Positions 82 to 85 (TDFV) are involved in Mg(2+) ion dislocation from EF-Tu.

It belongs to the EF-Ts family.

It localises to the cytoplasm. Functionally, associates with the EF-Tu.GDP complex and induces the exchange of GDP to GTP. It remains bound to the aminoacyl-tRNA.EF-Tu.GTP complex up to the GTP hydrolysis stage on the ribosome. The protein is Elongation factor Ts of Rickettsia africae (strain ESF-5).